We begin with the raw amino-acid sequence, 295 residues long: Cbb3-type cytochrome c oxidase subunit CcoP (295 aa).

Residues 1-31 (MAQKEKDALSGVETTGHEWDGLRELNNPLPK) lie on the Cytoplasmic side of the membrane. Residues 32 to 52 (WWLYIFYVCIAWSLVYYVLYP) form a helical membrane-spanning segment. Topologically, residues 53–295 (AWPLGKSYTK…VYVHNLGGGK (243 aa)) are periplasmic. Cytochrome c domains are found at residues 108–200 (FAMA…LSLN) and 207–292 (AAAE…HNLG). Residues C121, C124, H125, M175, C220, C223, H224, and M269 each coordinate heme c.

This sequence belongs to the CcoP / FixP family. Component of the cbb3-type cytochrome c oxidase at least composed of CcoN, CcoO, CcoQ and CcoP. Requires heme c as cofactor.

Its subcellular location is the cell inner membrane. Its pathway is energy metabolism; oxidative phosphorylation. In terms of biological role, C-type cytochrome. Part of the cbb3-type cytochrome c oxidase complex. CcoP subunit is required for transferring electrons from donor cytochrome c via its heme groups to CcoO subunit. From there, electrons are shuttled to the catalytic binuclear center of CcoN subunit where oxygen reduction takes place. The complex also functions as a proton pump. The polypeptide is Cbb3-type cytochrome c oxidase subunit CcoP (Azospirillum brasilense).